The primary structure comprises 214 residues: Orotate phosphoribosyltransferase (214 aa).

Residues Arg125, Lys126, Lys129, His131, and 151 to 159 (EDTSTTGNS) contribute to the 5-phospho-alpha-D-ribose 1-diphosphate site. Residues Thr155 and Arg183 each contribute to the orotate site.

Belongs to the purine/pyrimidine phosphoribosyltransferase family. PyrE subfamily. In terms of assembly, homodimer. Mg(2+) is required as a cofactor.

It catalyses the reaction orotidine 5'-phosphate + diphosphate = orotate + 5-phospho-alpha-D-ribose 1-diphosphate. The protein operates within pyrimidine metabolism; UMP biosynthesis via de novo pathway; UMP from orotate: step 1/2. Catalyzes the transfer of a ribosyl phosphate group from 5-phosphoribose 1-diphosphate to orotate, leading to the formation of orotidine monophosphate (OMP). The protein is Orotate phosphoribosyltransferase of Tropheryma whipplei (strain TW08/27) (Whipple's bacillus).